Reading from the N-terminus, the 349-residue chain is Transcriptional repressor protein KorB (349 aa).

2 disordered regions span residues 1 to 72 (MSAK…SPES) and 246 to 296 (RSHD…DKLK). Positions 25-40 (LGDLAGLLNEQPAANA) are enriched in low complexity. 2 stretches are compositionally biased toward basic and acidic residues: residues 246–256 (RSHDDGDRDPN) and 279–296 (DDAK…DKLK).

The protein belongs to the ParB family.

In conjunction with KorA, inhibits the transcription of the kilA, trfA and korAB operons. Is also involved in the negative control of the kilB operon. The polypeptide is Transcriptional repressor protein KorB (korB) (Escherichia coli).